Reading from the N-terminus, the 129-residue chain is Small ribosomal subunit protein uS11 (129 aa).

Belongs to the universal ribosomal protein uS11 family. As to quaternary structure, part of the 30S ribosomal subunit. Interacts with proteins S7 and S18. Binds to IF-3.

Functionally, located on the platform of the 30S subunit, it bridges several disparate RNA helices of the 16S rRNA. Forms part of the Shine-Dalgarno cleft in the 70S ribosome. In Beijerinckia indica subsp. indica (strain ATCC 9039 / DSM 1715 / NCIMB 8712), this protein is Small ribosomal subunit protein uS11.